Consider the following 1013-residue polypeptide: MQEQIEGAVDEELLKQSVLNNDEDDRRLTKLRIERFRTTHTLYIFLYSALAALQFIAIAFFTRGFLLSRKVLDDVANRDESTAPAKFDRLVLLVVDALRFDFVIPVDVAAEGYNSHYHNHLRALYERWDESILLKFLADPPTTTLQRLKGLTTGSLPTFIDAGSNFNGDVIDEDNIIKQMCLNNKTIYFAGDDTWDALFHPYLSNVSMPYESLNVWDLDTVDNGVISFFEDHLLNNPTEKKEWDVLVGHMLGIDHVGHKYGPSHFSMAEKQSQVDGFIRQIIDAVDEDTLLVVMGDHGMDHTGNHGGDSPAELESTLWLYTKRPGTWRRQAPAAYNTTELGRYYRAVNQIDLVPSLSLLLGLPIPFNNLGWPIEELAHDDDEWRLFTRQTLMQLETYRNTSNSITDSSKLKILEELKINANSNSSDAGNYQAILLEMYKDLWARFDYYSIGTGIILLIISLAMLITITRLIPSIVVGQMLSELVPTIIVMPLVSNVCFLGVFYVLRQPAFLQNWLWASLLATAVGIIIGFYVPIFDRYNLTWLVLRFGEELSDYWSRVAAFLITLHALIFTSNSFTIWEDKIVSFSLTTLGMLTLYEFVFLPKRHSTSAILAAALGEKEGTVSGISSGQANSDSLPLGRFARIVGGYHSIVLIVCTRLASLITICREEQGAYCTPTFTLTNNYSFSVMLGCLFLVFATPACIKGYYNVSSSYQAAAPIWIGMLMKSILFVNFIYWELKTFENTSDTHGLNLTIFNLTISRIVVGVSLVAANIGWMMGPLCIKLNVHNNDRRSQQATILGYANAYGAQYFLLVINFFMCILLFNKPLAQLSLFLMCNQLLSILEIFDLLKLKENLIGPVALGLLSYQQFFSTGHQATIPAVQWDMGFILTERITFPFTHLGIVLNTFGPHILCGISVALLTLWKQPPGILRANTLLARVVSNCGMLLIYQTVLCLSTFIWVTNFRRHLMVWKIFCPRFMFAALSLIVTQLVLTFITIAFASGRLIKQIDRMFWK.

A helical transmembrane segment spans residues 41-61; that stretch reads TLYIFLYSALAALQFIAIAFF. N-linked (GlcNAc...) asparagine glycosylation is found at Asn-184, Asn-205, Asn-336, Asn-399, and Asn-423. Helical transmembrane passes span 447-467, 484-504, and 515-535; these read YYSIGTGIILLIISLAMLITI, VPTIIVMPLVSNVCFLGVFYV, and LWASLLATAVGIIIGFYVPIF. Asn-539 carries an N-linked (GlcNAc...) asparagine glycan. The next 4 helical transmembrane spans lie at 558-578, 582-602, 643-663, and 682-702; these read VAAFLITLHALIFTSNSFTIW, IVSFSLTTLGMLTLYEFVFLP, IVGGYHSIVLIVCTRLASLIT, and NYSFSVMLGCLFLVFATPACI. The N-linked (GlcNAc...) asparagine glycan is linked to Asn-707. The helical transmembrane segment at 715-735 threads the bilayer; it reads AAPIWIGMLMKSILFVNFIYW. 3 N-linked (GlcNAc...) asparagine glycosylation sites follow: Asn-742, Asn-750, and Asn-755. Helical transmembrane passes span 761–781, 802–822, 825–845, 868–888, 899–919, 943–963, and 977–997; these read IVVGVSLVAANIGWMMGPLCI, NAYGAQYFLLVINFFMCILLF, PLAQLSLFLMCNQLLSILEIF, FFSTGHQATIPAVQWDMGFIL, LGIVLNTFGPHILCGISVALL, GMLLIYQTVLCLSTFIWVTNF, and FMFAALSLIVTQLVLTFITIA.

Belongs to the PIGG/PIGN/PIGO family. PIGO subfamily.

It localises to the endoplasmic reticulum membrane. The protein operates within glycolipid biosynthesis; glycosylphosphatidylinositol-anchor biosynthesis. In terms of biological role, involved in glycosylphosphatidylinositol-anchor biosynthesis. Transfers ethanolamine phosphate to the GPI third mannose which links the GPI-anchor to the C-terminus of the proteins by an amide bond. Involved in cell wall biosynthesis. This chain is GPI ethanolamine phosphate transferase 3 (GPI13), found in Eremothecium gossypii (strain ATCC 10895 / CBS 109.51 / FGSC 9923 / NRRL Y-1056) (Yeast).